We begin with the raw amino-acid sequence, 364 residues long: Deoxyribonuclease-2-alpha (364 aa).

The N-terminal stretch at 1–21 (MATLSPLLLAALLWVPVGTLT) is a signal peptide. A disulfide bridge links Cys-22 with Cys-161. N-linked (GlcNAc...) asparagine glycans are attached at residues Asn-72, Asn-88, Asn-171, Asn-214, Asn-268, and Asn-292. 2 cysteine pairs are disulfide-bonded: Cys-269–Cys-349 and Cys-310–Cys-329. Residue His-297 is part of the active site.

It belongs to the DNase II family.

Its subcellular location is the lysosome. The enzyme catalyses Endonucleolytic cleavage to nucleoside 3'-phosphates and 3'-phosphooligonucleotide end-products.. Hydrolyzes DNA under acidic conditions with a preference for double-stranded DNA. Plays a major role in the clearance of nucleic acids generated through apoptosis, hence preventing autoinflammation. Necessary for proper fetal development and for definitive erythropoiesis in fetal liver and bone marrow, where it degrades nuclear DNA expelled from erythroid precursor cells. The polypeptide is Deoxyribonuclease-2-alpha (DNASE2) (Sus scrofa (Pig)).